A 513-amino-acid polypeptide reads, in one-letter code: GMP synthase [glutamine-hydrolyzing] (513 aa).

The Glutamine amidotransferase type-1 domain occupies 7–197 (TILVLDFGGQ…LFGVCGCTGE (191 aa)). Cys-84 functions as the Nucleophile in the catalytic mechanism. Catalysis depends on residues His-171 and Glu-173. A GMPS ATP-PPase domain is found at 198-387 (WTMENFIEEQ…LGLPEDIVWR (190 aa)). 225–231 (SGGVDSS) provides a ligand contact to ATP.

In terms of assembly, homodimer.

The enzyme catalyses XMP + L-glutamine + ATP + H2O = GMP + L-glutamate + AMP + diphosphate + 2 H(+). It participates in purine metabolism; GMP biosynthesis; GMP from XMP (L-Gln route): step 1/1. Catalyzes the synthesis of GMP from XMP. This chain is GMP synthase [glutamine-hydrolyzing], found in Heliobacterium modesticaldum (strain ATCC 51547 / Ice1).